The following is a 340-amino-acid chain: tRNA N6-adenosine threonylcarbamoyltransferase (340 aa).

Residues His-113 and His-117 each coordinate Fe cation. Substrate contacts are provided by residues 135-139 (LVSGG), Asp-169, Gly-182, Asp-186, and Asn-274. Residue Asp-302 coordinates Fe cation.

The protein belongs to the KAE1 / TsaD family. Requires Fe(2+) as cofactor.

The protein localises to the cytoplasm. It catalyses the reaction L-threonylcarbamoyladenylate + adenosine(37) in tRNA = N(6)-L-threonylcarbamoyladenosine(37) in tRNA + AMP + H(+). In terms of biological role, required for the formation of a threonylcarbamoyl group on adenosine at position 37 (t(6)A37) in tRNAs that read codons beginning with adenine. Is involved in the transfer of the threonylcarbamoyl moiety of threonylcarbamoyl-AMP (TC-AMP) to the N6 group of A37, together with TsaE and TsaB. TsaD likely plays a direct catalytic role in this reaction. The chain is tRNA N6-adenosine threonylcarbamoyltransferase from Mycolicibacterium vanbaalenii (strain DSM 7251 / JCM 13017 / BCRC 16820 / KCTC 9966 / NRRL B-24157 / PYR-1) (Mycobacterium vanbaalenii).